The primary structure comprises 357 residues: tRNA N6-adenosine threonylcarbamoyltransferase (357 aa).

Fe cation contacts are provided by histidine 115 and histidine 119. Substrate is bound by residues 137–141, aspartate 170, glycine 183, and asparagine 281; that span reads LASGG. Aspartate 309 provides a ligand contact to Fe cation.

The protein belongs to the KAE1 / TsaD family. Fe(2+) serves as cofactor.

The protein localises to the cytoplasm. It catalyses the reaction L-threonylcarbamoyladenylate + adenosine(37) in tRNA = N(6)-L-threonylcarbamoyladenosine(37) in tRNA + AMP + H(+). In terms of biological role, required for the formation of a threonylcarbamoyl group on adenosine at position 37 (t(6)A37) in tRNAs that read codons beginning with adenine. Is involved in the transfer of the threonylcarbamoyl moiety of threonylcarbamoyl-AMP (TC-AMP) to the N6 group of A37, together with TsaE and TsaB. TsaD likely plays a direct catalytic role in this reaction. The sequence is that of tRNA N6-adenosine threonylcarbamoyltransferase from Bradyrhizobium diazoefficiens (strain JCM 10833 / BCRC 13528 / IAM 13628 / NBRC 14792 / USDA 110).